Reading from the N-terminus, the 424-residue chain is F-box protein At2g38590 (424 aa).

The F-box domain occupies 2-47 (TTMISNLPRVLIEEIFFRVPLKSLRAVRLTCKSWNTLSKSRSFRKL).

The protein is F-box protein At2g38590 of Arabidopsis thaliana (Mouse-ear cress).